Here is a 614-residue protein sequence, read N- to C-terminus: MSDINSNSYDPYHHPQQHQQESQYHPQQQQQQQQQQQQQQEYYNQQHQQESQYQQQSPPQQQYDNHQHHQQDLNQAHNSGHGRSHNSGHGHSHGNNYSGLPHLRTQVGHAQPYFSSYNELNNSGDISNSNNNNNNNNQYNYNNNNNNNNYNNNINNNQFNSSVYNNNNNNNNNNNNEFSIDGKSGITIKHLLNNLNRDSDAKKLAAWISVMLVFTIYEIFYGAYLESLGLVSDGFHALFDCIGMGIALLAMLVGKRGISNQEYTYGYDRWEVLGTFSNGCFLLFVSFFLFLESIERLLEPPHIHNHGRVMSLATISLIINIVGVLFFKQKSNERKQQSSIRSENLLTISHHILVDSCTSLGVILSSLVGQAFGLEISDSLISIIIACIIVYNALPICIKTSAILLQTTPDQLKININNAIKDILVMEGVIDVTDKHFWSHSPGNIIATVNLLTKKNCDDFTLTQSIRNRLSFVQDLTIQLDKEGKHNSHSHGGAHHHPHEHKEDKKSHNHSHGHNHGHSHGHSHGGNDDHEHGENCDEEHEPVPKYQVQPTSPFSSHYTDIHSNNTPIPLYKSEQDDEDDEDDYDHDEHHHDHDHDEHHHGHSHNSSHSHAHNH.

Disordered regions lie at residues 1 to 103 (MSDI…LPHL) and 115 to 178 (SSYN…NNEF). Residues 1–203 (MSDINSNSYD…NLNRDSDAKK (203 aa)) lie on the Cytoplasmic side of the membrane. The span at 17-64 (QHQQESQYHPQQQQQQQQQQQQQQEYYNQQHQQESQYQQQSPPQQQYD) shows a compositional bias: low complexity. The segment covering 80–92 (GHGRSHNSGHGHS) has biased composition (basic residues). The span at 121 to 176 (NNSGDISNSNNNNNNNNQYNYNNNNNNNNYNNNINNNQFNSSVYNNNNNNNNNNNN) shows a compositional bias: low complexity. Residues 204–224 (LAAWISVMLVFTIYEIFYGAY) traverse the membrane as a helical segment. The Extracellular portion of the chain corresponds to 225–233 (LESLGLVSD). The helical transmembrane segment at 234 to 254 (GFHALFDCIGMGIALLAMLVG) threads the bilayer. Topologically, residues 255 to 270 (KRGISNQEYTYGYDRW) are cytoplasmic. A helical transmembrane segment spans residues 271–291 (EVLGTFSNGCFLLFVSFFLFL). Topologically, residues 292–306 (ESIERLLEPPHIHNH) are extracellular. A helical membrane pass occupies residues 307–327 (GRVMSLATISLIINIVGVLFF). Residues 328–351 (KQKSNERKQQSSIRSENLLTISHH) lie on the Cytoplasmic side of the membrane. The chain crosses the membrane as a helical span at residues 352–372 (ILVDSCTSLGVILSSLVGQAF). At 373–377 (GLEIS) the chain is on the extracellular side. The chain crosses the membrane as a helical span at residues 378–398 (DSLISIIIACIIVYNALPICI). The Cytoplasmic segment spans residues 399–614 (KTSAILLQTT…NSSHSHAHNH (216 aa)). A disordered region spans residues 483–614 (EGKHNSHSHG…NSSHSHAHNH (132 aa)). 2 stretches are compositionally biased toward basic residues: residues 487-499 (NSHS…HHPH) and 507-523 (SHNH…HGHS). Over residues 525-535 (GGNDDHEHGEN) the composition is skewed to basic and acidic residues. The segment covering 548–567 (VQPTSPFSSHYTDIHSNNTP) has biased composition (polar residues). Over residues 575–585 (QDDEDDEDDYD) the composition is skewed to acidic residues. Residues 586–599 (HDEHHHDHDHDEHH) are compositionally biased toward basic and acidic residues. The span at 600-614 (HGHSHNSSHSHAHNH) shows a compositional bias: basic residues.

It belongs to the cation diffusion facilitator (CDF) transporter (TC 2.A.4) family. SLC30A subfamily.

The protein localises to the membrane. Functionally, may be involved in zinc transport from the cytoplasm to either intracellular organelles or extracellular spaces. The chain is Probable zinc transporter protein DDB_G0269332 from Dictyostelium discoideum (Social amoeba).